The primary structure comprises 753 residues: Bile salt-activated lipase (753 aa).

Positions 1–20 (MGRLQLVVLGLTCCWAVASA) are cleaved as a signal peptide. Residues 21 to 121 (AKLGAVYTEG…KQVSRDLPVM (101 aa)) form a heparin-binding region. Cys-84 and Cys-100 are oxidised to a cystine. Residue Asn-207 is glycosylated (N-linked (GlcNAc...) (complex) asparagine). The Acyl-ester intermediate role is filled by Ser-214. Cys-266 and Cys-277 are disulfide-bonded. Catalysis depends on charge relay system residues Asp-340 and His-455. The segment at 555 to 753 (QEATPVPPTG…EAQMPAVIRF (199 aa)) is disordered. O-linked (GalNAc...) threonine glycans are attached at residues Thr-558, Thr-569, and Thr-579. 17 consecutive repeat copies span residues 559-569 (PVPPTGDSEAT), 570-580 (PVPPTGDSETA), 581-591 (PVPPTGDSGAP), 592-602 (PVPPTGDSGAP), 603-613 (PVPPTGDSGAP), 614-624 (PVPPTGDSGAP), 625-635 (PVPPTGDSGAP), 636-646 (PVPPTGDSGAP), 647-657 (PVPPTGDSGAP), 658-668 (PVPPTGDSGAP), 669-679 (PVPPTGDAGPP), 680-690 (PVPPTGDSGAP), 691-701 (PVPPTGDSGAP), 702-712 (PVTPTGDSETA), 713-723 (PVPPTGDSGAP), 724-734 (PVPPTGDSEAA), and 735-745 (PVPPTDDSKEA). The interval 559-745 (PVPPTGDSEA…VPPTDDSKEA (187 aa)) is 17 X 11 AA tandem repeats, glycodomain, O-linked (mucin type). O-linked (GalNAc...) threonine glycosylation is found at Thr-607, Thr-618, Thr-629, Thr-640, Thr-651, Thr-662, and Thr-673. Positions 668–683 (PPVPPTGDAGPPPVPP) are enriched in pro residues.

Belongs to the type-B carboxylesterase/lipase family. As to quaternary structure, interacts with CLC. In terms of processing, N- and O-glycosylated. Mammary gland and pancreas. Detected in pancreatic and duodenal juice (at protein level). Expressed by eosinophils.

The protein localises to the secreted. The catalysed reaction is a triacylglycerol + H2O = a diacylglycerol + a fatty acid + H(+). It catalyses the reaction 1,2,3-tri-(9Z-octadecenoyl)-glycerol + H2O = di-(9Z)-octadecenoylglycerol + (9Z)-octadecenoate + H(+). It carries out the reaction 1,2,3-trioctanoylglycerol + H2O = dioctanoylglycerol + octanoate + H(+). The enzyme catalyses a sterol ester + H2O = a sterol + a fatty acid + H(+). The catalysed reaction is cholesteryl (9Z-octadecenoate) + H2O = cholesterol + (9Z)-octadecenoate + H(+). It catalyses the reaction an acetyl ester + H2O = an aliphatic alcohol + acetate + H(+). It carries out the reaction a butanoate ester + H2O = an aliphatic alcohol + butanoate + H(+). The enzyme catalyses 9-hexadecanoyloxy-octadecanoate + H2O = 9-hydroxy-octadecanoate + hexadecanoate + H(+). The catalysed reaction is 9-(9Z-octadecenoyloxy)-octadecanoate + H2O = 9-hydroxy-octadecanoate + (9Z)-octadecenoate + H(+). It catalyses the reaction 1-hexadecanoyl-sn-glycero-3-phosphocholine + H2O = sn-glycerol 3-phosphocholine + hexadecanoate + H(+). It carries out the reaction 12-hexadecanoyloxy-octadecanoate + H2O = 12-hydroxyoctadecanoate + hexadecanoate + H(+). The enzyme catalyses 12-(9Z-octadecenoyloxy)-octadecanoate + H2O = 12-hydroxyoctadecanoate + (9Z)-octadecenoate + H(+). The catalysed reaction is 13-(9Z-octadecenoyloxy)-octadecanoate + H2O = 13-hydroxy-octadecanoate + (9Z)-octadecenoate + H(+). It catalyses the reaction 9-(9Z-hexadecenoyloxy)-octadecanoate + H2O = (9Z)-hexadecenoate + 9-hydroxy-octadecanoate + H(+). It carries out the reaction 12-(9Z-hexadecenoyloxy)-octadecanoate + H2O = 12-hydroxyoctadecanoate + (9Z)-hexadecenoate + H(+). The enzyme catalyses 13-(9Z-hexadecenoyloxy)-octadecanoate + H2O = 13-hydroxy-octadecanoate + (9Z)-hexadecenoate + H(+). The catalysed reaction is 12-octadecanoyloxy-octadecanoate + H2O = 12-hydroxyoctadecanoate + octadecanoate + H(+). It catalyses the reaction 13-octadecanoyloxy-octadecanoate + H2O = 13-hydroxy-octadecanoate + octadecanoate + H(+). It carries out the reaction 5-(9Z-hexadecenoyloxy)-octadecanoate + H2O = 5-hydroxy-octadecanoate + (9Z)-hexadecenoate + H(+). The enzyme catalyses 9-octadecanoyloxy-octadecanoate + H2O = 9-hydroxy-octadecanoate + octadecanoate + H(+). Its activity is regulated as follows. Activated by bile salts such as sodium taurocholate. Functionally, catalyzes the hydrolysis of a wide range of substrates including cholesteryl esters, phospholipids, lysophospholipids, di- and tri-acylglycerols, and fatty acid esters of hydroxy fatty acids (FAHFAs). Preferentially hydrolyzes FAHFAs with the ester bond further away from the carboxylate. Unsaturated FAHFAs are hydrolyzed more quickly than saturated FAHFAs. Has an essential role in the complete digestion of dietary lipids and their intestinal absorption, along with the absorption of fat-soluble vitamins. The chain is Bile salt-activated lipase (CEL) from Homo sapiens (Human).